The following is a 392-amino-acid chain: L-serine phosphate decarboxylase (392 aa).

Residues 22–29 (NAGSHSPS) are required for catalytic activity. Position 180 (Asn-180) interacts with O-phospho-L-serine. Lys-243 carries the post-translational modification N6-(pyridoxal phosphate)lysine. O-phospho-L-serine is bound by residues Arg-354 and Arg-368.

This sequence belongs to the class-II pyridoxal-phosphate-dependent aminotransferase family. Homodimer. It depends on pyridoxal 5'-phosphate as a cofactor.

It catalyses the reaction O-phospho-L-serine + H(+) = phosphoethanolamine + CO2. The protein operates within cofactor biosynthesis. In terms of biological role, pyridoxal phosphate (PLP)-dependent decarboxylase involved in the biosynthesis of norcobamides, cofactors in the tetrachloroethene reductive dehalogenase PceA of S.multivorans. Catalyzes the decarboxylation of L-serine O-phosphate to ethanolamine O-phosphate, the precursor for the linkage between the nucleotide loop and the corrin ring in norcobamide. Less active with L-threonine phosphate. No activity with L-serine or L-threonine. Has no aminotransferase activity as no production of L-glutamate with L-histidinol phosphate and 2-oxoglutarate as substrates. Complements growth defects in the S.enterica cobD deletion mutant, but of the cobamides, the norpseudo-vitamin B12 (norpseudo-B12) rather than the pseudo-B12 is produced in the mutant. However, addition of L-threonine phosphate to the culture minimal medium of the mutant results in formation of also the pseudo-B12, indicating the dual substrate specificity of this enzyme. The protein is L-serine phosphate decarboxylase of Sulfurospirillum multivorans (strain DM 12446 / JCM 15788 / NBRC 109480).